A 217-amino-acid chain; its full sequence is Protein MODIFYING WALL LIGNIN-2 (217 aa).

A signal peptide spans 1-23; it reads MHNLFLYSVVFSLGLVSFITCFA. Residues 24–51 are Cytoplasmic-facing; sequence AEFKRTQKEDIRWDTERNCYVPGSHAFG. The chain crosses the membrane as a helical span at residues 52 to 72; that stretch reads LGSAAVLCFCLAQIVGNIVVF. Topologically, residues 73-94 are extracellular; the sequence is RNHRTRTKREDGYKITDLTLPT. A helical membrane pass occupies residues 95-115; the sequence is VLLLLSWSNFVVVVLILSTAI. Residues 116 to 137 lie on the Cytoplasmic side of the membrane; that stretch reads SMSRAQAYGEGWLDEDCYLVKD. Residues 138–158 form a helical membrane-spanning segment; it reads GVFAASGCLAILGLGALTISA. The Extracellular portion of the chain corresponds to 159–217; the sequence is TRIKVKKQQQLVQVVIKDQNQDQRRSMEEEQKHDEHQTNKSESVIHLVEEVSSTNISRI. 2 N-linked (GlcNAc...) asparagine glycosylation sites follow: asparagine 197 and asparagine 213.

This sequence belongs to the DESIGUAL family.

Its subcellular location is the cell membrane. Its function is as follows. Together with MWL1, contributes to secondary cell wall biology, specifically lignin biosynthesis. The sequence is that of Protein MODIFYING WALL LIGNIN-2 from Arabidopsis thaliana (Mouse-ear cress).